Here is a 91-residue protein sequence, read N- to C-terminus: Acylphosphatase (91 aa).

The Acylphosphatase-like domain maps to 5–91; it reads CLHAYVGGRV…QGIAGFIVRR (87 aa). Catalysis depends on residues arginine 20 and asparagine 38.

It belongs to the acylphosphatase family.

It carries out the reaction an acyl phosphate + H2O = a carboxylate + phosphate + H(+). This Pseudomonas paraeruginosa (strain DSM 24068 / PA7) (Pseudomonas aeruginosa (strain PA7)) protein is Acylphosphatase (acyP).